A 376-amino-acid polypeptide reads, in one-letter code: Gibberellin 20 oxidase 4 (376 aa).

One can recognise a Fe2OG dioxygenase domain in the interval 222–322 (DNESIFRLNY…RKTLAFFLCP (101 aa)). Fe cation is bound by residues His247, Asp249, and His303. The active site involves Arg313.

The protein belongs to the iron/ascorbate-dependent oxidoreductase family. GA20OX subfamily. The cofactor is Fe(2+). L-ascorbate serves as cofactor. Expressed in roots. Detected in leaves, inflorescences and siliques, but not in stems and dry seeds.

The catalysed reaction is gibberellin A12 + 2 2-oxoglutarate + 3 O2 + H(+) = gibberellin A9 + 2 succinate + 3 CO2 + 2 H2O. The enzyme catalyses gibberellin A53 + 2 2-oxoglutarate + 3 O2 + H(+) = gibberellin A20 + 2 succinate + 3 CO2 + 2 H2O. The protein operates within plant hormone biosynthesis; gibberellin biosynthesis. Its function is as follows. Key oxidase enzyme in the biosynthesis of gibberellin that catalyzes the conversion of GA12 and GA53 to GA9 and GA20 respectively, via a three-step oxidation at C-20 of the GA skeleton. This chain is Gibberellin 20 oxidase 4 (GA20OX4), found in Arabidopsis thaliana (Mouse-ear cress).